A 240-amino-acid chain; its full sequence is Methylthioribulose-1-phosphate dehydratase (240 aa).

A substrate-binding site is contributed by cysteine 99. 2 residues coordinate Zn(2+): histidine 116 and histidine 118. The active-site Proton donor/acceptor is the glutamate 145. Histidine 201 is a binding site for Zn(2+).

This sequence belongs to the aldolase class II family. MtnB subfamily. Zn(2+) is required as a cofactor.

The protein localises to the cytoplasm. It carries out the reaction 5-(methylsulfanyl)-D-ribulose 1-phosphate = 5-methylsulfanyl-2,3-dioxopentyl phosphate + H2O. It participates in amino-acid biosynthesis; L-methionine biosynthesis via salvage pathway; L-methionine from S-methyl-5-thio-alpha-D-ribose 1-phosphate: step 2/6. In terms of biological role, catalyzes the dehydration of methylthioribulose-1-phosphate (MTRu-1-P) into 2,3-diketo-5-methylthiopentyl-1-phosphate (DK-MTP-1-P). The sequence is that of Methylthioribulose-1-phosphate dehydratase from Paracoccidioides brasiliensis (strain Pb18).